The sequence spans 393 residues: Bifunctional enzyme IspD/IspF (393 aa).

The segment at methionine 1–isoleucine 234 is 2-C-methyl-D-erythritol 4-phosphate cytidylyltransferase. Residues arginine 235–alanine 393 are 2-C-methyl-D-erythritol 2,4-cyclodiphosphate synthase. Residues aspartate 241 and histidine 243 each contribute to the a divalent metal cation site. 4-CDP-2-C-methyl-D-erythritol 2-phosphate-binding positions include aspartate 241–histidine 243 and histidine 267–serine 268. Residue histidine 275 coordinates a divalent metal cation. 4-CDP-2-C-methyl-D-erythritol 2-phosphate is bound by residues aspartate 289–glycine 291, threonine 365–glutamate 368, phenylalanine 372, and arginine 375.

This sequence in the N-terminal section; belongs to the IspD/TarI cytidylyltransferase family. IspD subfamily. In the C-terminal section; belongs to the IspF family. The cofactor is a divalent metal cation.

It carries out the reaction 2-C-methyl-D-erythritol 4-phosphate + CTP + H(+) = 4-CDP-2-C-methyl-D-erythritol + diphosphate. The enzyme catalyses 4-CDP-2-C-methyl-D-erythritol 2-phosphate = 2-C-methyl-D-erythritol 2,4-cyclic diphosphate + CMP. It participates in isoprenoid biosynthesis; isopentenyl diphosphate biosynthesis via DXP pathway; isopentenyl diphosphate from 1-deoxy-D-xylulose 5-phosphate: step 2/6. Its pathway is isoprenoid biosynthesis; isopentenyl diphosphate biosynthesis via DXP pathway; isopentenyl diphosphate from 1-deoxy-D-xylulose 5-phosphate: step 4/6. Its function is as follows. Bifunctional enzyme that catalyzes the formation of 4-diphosphocytidyl-2-C-methyl-D-erythritol from CTP and 2-C-methyl-D-erythritol 4-phosphate (MEP) (IspD), and catalyzes the conversion of 4-diphosphocytidyl-2-C-methyl-D-erythritol 2-phosphate (CDP-ME2P) to 2-C-methyl-D-erythritol 2,4-cyclodiphosphate (ME-CPP) with a corresponding release of cytidine 5-monophosphate (CMP) (IspF). This is Bifunctional enzyme IspD/IspF from Bradyrhizobium sp. (strain BTAi1 / ATCC BAA-1182).